A 662-amino-acid polypeptide reads, in one-letter code: PsbB mRNA maturation factor Mbb1, chloroplastic (662 aa).

The N-terminal 50 residues, 1–50, are a transit peptide targeting the chloroplast; that stretch reads MSLVPFSQLWRGVRTRGPVEQASSSSSSSSSSRRTWYAPARSQTGVQVAA. 2 disordered regions span residues 14–38 and 75–101; these read RTRGPVEQASSSSSSSSSSRRTWYA and IIADLSSSGSGDGEGERGDATGSRDEA. Low complexity predominate over residues 23-32; sequence SSSSSSSSSS. Over residues 88 to 101 the composition is skewed to basic and acidic residues; it reads EGERGDATGSRDEA. TPR repeat units follow at residues 126–160, 161–194, 196–229, 231–263, 269–302, 305–338, 339–372, 373–406, 408–440, and 444–477; these read SRIRARQTLDLNERKSLYKAAEDGLRRCLALDPAD, PRAYVVLGKTLVQQKRYDEARQLYQDGCANTGNV, PYIWSAWGWLEARTGNVERARKLYDAAVVVDGTH, CAWHKWGMLEKGQGNFTRARDLWMQGIQRCRRK, AYLYNALGCMAAQLGRVGEARSWFEEGTRSAEGA, VALWQAWAVLEAKQGDPTVVRYLFRKALGANPRS, RYVHLAWALWERRQGNPQHCLALLRRGCELNPTD, PALYQAWALVEKQAGRIERARELFEQGLRADPSD, YMWQAYGVMEAEQGNMDRARQLFQEGVWADPRS, and VYVFHAWGALEWQAGNVQTARELFKAAVRVDPKS. 2 disordered regions span residues 540–563 and 598–662; these read SDGNGSSSSNGGAGGQQAGSEAAA and LPDF…RSMG.

Part of a 300 kDa complex that associates with RNA.

It localises to the plastid. It is found in the chloroplast stroma. Involved, directly or indirectly, in the processing of the chloroplast encoded psbB mRNA to its mature form, acting via the 5'-UTR of the psbB mRNA. The sequence is that of PsbB mRNA maturation factor Mbb1, chloroplastic (MBB1) from Chlamydomonas reinhardtii (Chlamydomonas smithii).